A 403-amino-acid chain; its full sequence is Phosphoglycerate kinase (403 aa).

Substrate contacts are provided by residues D22–N24, R37, H60–R63, R119, and R156. ATP is bound by residues K206, G302, E333, and G359–S362.

It belongs to the phosphoglycerate kinase family. Monomer.

It is found in the cytoplasm. It carries out the reaction (2R)-3-phosphoglycerate + ATP = (2R)-3-phospho-glyceroyl phosphate + ADP. Its pathway is carbohydrate degradation; glycolysis; pyruvate from D-glyceraldehyde 3-phosphate: step 2/5. In Streptomyces avermitilis (strain ATCC 31267 / DSM 46492 / JCM 5070 / NBRC 14893 / NCIMB 12804 / NRRL 8165 / MA-4680), this protein is Phosphoglycerate kinase.